Reading from the N-terminus, the 77-residue chain is Large ribosomal subunit protein uL24 (77 aa).

It belongs to the universal ribosomal protein uL24 family. As to quaternary structure, part of the 50S ribosomal subunit.

One of two assembly initiator proteins, it binds directly to the 5'-end of the 23S rRNA, where it nucleates assembly of the 50S subunit. In terms of biological role, one of the proteins that surrounds the polypeptide exit tunnel on the outside of the subunit. This Sulfurovum sp. (strain NBC37-1) protein is Large ribosomal subunit protein uL24.